The primary structure comprises 833 residues: Leucine--tRNA ligase (833 aa).

A 'HIGH' region motif is present at residues 41–52; the sequence is PYPSGAGLHVGH. Residues 610 to 614 carry the 'KMSKS' region motif; it reads KMSKS. Lysine 613 is a binding site for ATP.

This sequence belongs to the class-I aminoacyl-tRNA synthetase family.

The protein resides in the cytoplasm. The catalysed reaction is tRNA(Leu) + L-leucine + ATP = L-leucyl-tRNA(Leu) + AMP + diphosphate. The chain is Leucine--tRNA ligase from Streptococcus agalactiae serotype Ia (strain ATCC 27591 / A909 / CDC SS700).